Reading from the N-terminus, the 931-residue chain is Probable UDP-N-acetylglucosamine--peptide N-acetylglucosaminyltransferase SPINDLY (931 aa).

Over residues 1-15 (MAWTEKDVENGKESE) the composition is skewed to basic and acidic residues. Residues 1–38 (MAWTEKDVENGKESESLGNNGFLKGGQSSSGSKGSPGR) form a disordered region. Over residues 25-37 (GGQSSSGSKGSPG) the composition is skewed to low complexity. TPR repeat units follow at residues 48-81 (DKDAITYANILRSRNKFVDALAIYESVLEKDSKS), 82-115 (IESLIGKGICLQMQNTGRLAFESFSEAIKVDPQN), 116-149 (ACALTHCGILYKDEGRLVEAAESYEKALKADPSY), 157-190 (AIVLTDIGTSLKLAGNTQEGIQKYYEAIKIDSHY), 191-224 (APAYYNLGVVYSEMMQYDMALNCYEKAALERPMY), 225-258 (AEAYCNMGVIFKNRGDLESAIACYERCLAVSPNF), 266-299 (AIALTDLGTKVKLEGDINQGVAYYKKALCYNWHY), 300-333 (ADAMYNLGVAYGEMLKFDMAIVFYELAFHFNPHC), 334-367 (AEACNNLGVIYKDRDNLDKAVECYQLALSIKPNF), 369-401 (QSLNNLGVVYTVQGKMDAAASMIEKAIIANPTY), and 402-435 (AEAYNNLGVLYRDAGNISLAIEAYEQCLKIDPDS). Residues 436-931 (RNAGQNRLLA…NHNGNHGNLS (496 aa)) are catalytic region. Residues 864 to 884 (QQQQTQTESVVPEESSVNPSE) show a composition bias toward low complexity. The tract at residues 864–931 (QQQQTQTESV…NHNGNHGNLS (68 aa)) is disordered. Residues 910–931 (KSSTSEENGVQSNHNGNHGNLS) are compositionally biased toward polar residues.

The protein belongs to the glycosyltransferase 41 family. O-GlcNAc transferase subfamily.

It localises to the nucleus. The catalysed reaction is L-seryl-[protein] + UDP-N-acetyl-alpha-D-glucosamine = 3-O-(N-acetyl-beta-D-glucosaminyl)-L-seryl-[protein] + UDP + H(+). It carries out the reaction L-threonyl-[protein] + UDP-N-acetyl-alpha-D-glucosamine = 3-O-(N-acetyl-beta-D-glucosaminyl)-L-threonyl-[protein] + UDP + H(+). It functions in the pathway protein modification; protein glycosylation. In terms of biological role, probable O-linked N-acetylglucosamine transferase (OGT) involved in various processes such as gibberellin (GA) signaling pathway. OGTs catalyze the addition of nucleotide-activated sugars directly onto the polypeptide through O-glycosidic linkage with the hydroxyl of serine or threonine. Probably acts by adding O-linked sugars to yet unknown proteins. The sequence is that of Probable UDP-N-acetylglucosamine--peptide N-acetylglucosaminyltransferase SPINDLY (SPY) from Solanum lycopersicum (Tomato).